The following is a 693-amino-acid chain: Polyphosphate kinase (693 aa).

Asn57 is a binding site for ATP. Mg(2+) contacts are provided by Arg383 and Arg413. His443 functions as the Phosphohistidine intermediate in the catalytic mechanism. Residues Tyr476, Arg572, and His601 each contribute to the ATP site.

The protein belongs to the polyphosphate kinase 1 (PPK1) family. Mg(2+) is required as a cofactor. In terms of processing, an intermediate of this reaction is the autophosphorylated ppk in which a phosphate is covalently linked to a histidine residue through a N-P bond.

It catalyses the reaction [phosphate](n) + ATP = [phosphate](n+1) + ADP. Catalyzes the reversible transfer of the terminal phosphate of ATP to form a long-chain polyphosphate (polyP). The protein is Polyphosphate kinase of Acinetobacter baumannii (strain ATCC 17978 / DSM 105126 / CIP 53.77 / LMG 1025 / NCDC KC755 / 5377).